The sequence spans 434 residues: Tol-Pal system protein TolB (434 aa).

The first 21 residues, 1 to 21 (MTVRRALALAALALAVSPALA), serve as a signal peptide directing secretion. The tract at residues 411 to 434 (GDRQTPVTSGKTDLAAPAWGPLAP) is disordered.

Belongs to the TolB family. In terms of assembly, the Tol-Pal system is composed of five core proteins: the inner membrane proteins TolA, TolQ and TolR, the periplasmic protein TolB and the outer membrane protein Pal. They form a network linking the inner and outer membranes and the peptidoglycan layer.

Its subcellular location is the periplasm. In terms of biological role, part of the Tol-Pal system, which plays a role in outer membrane invagination during cell division and is important for maintaining outer membrane integrity. This chain is Tol-Pal system protein TolB, found in Anaeromyxobacter dehalogenans (strain 2CP-1 / ATCC BAA-258).